The following is a 422-amino-acid chain: Serine--tRNA ligase (422 aa).

Residue 230–232 (TAE) participates in L-serine binding. Residue 261–263 (RNE) coordinates ATP. Glu284 contributes to the L-serine binding site. 347–350 (EVSS) serves as a coordination point for ATP. Residue Ser383 coordinates L-serine.

The protein belongs to the class-II aminoacyl-tRNA synthetase family. Type-1 seryl-tRNA synthetase subfamily. Homodimer. The tRNA molecule binds across the dimer.

Its subcellular location is the cytoplasm. The enzyme catalyses tRNA(Ser) + L-serine + ATP = L-seryl-tRNA(Ser) + AMP + diphosphate + H(+). It catalyses the reaction tRNA(Sec) + L-serine + ATP = L-seryl-tRNA(Sec) + AMP + diphosphate + H(+). The protein operates within aminoacyl-tRNA biosynthesis; selenocysteinyl-tRNA(Sec) biosynthesis; L-seryl-tRNA(Sec) from L-serine and tRNA(Sec): step 1/1. In terms of biological role, catalyzes the attachment of serine to tRNA(Ser). Is also able to aminoacylate tRNA(Sec) with serine, to form the misacylated tRNA L-seryl-tRNA(Sec), which will be further converted into selenocysteinyl-tRNA(Sec). This is Serine--tRNA ligase from Herpetosiphon aurantiacus (strain ATCC 23779 / DSM 785 / 114-95).